A 556-amino-acid polypeptide reads, in one-letter code: Membrane protein insertase YidC (556 aa).

The chain crosses the membrane as a helical span at residues 7–27 (ILLVALAVVAYLMVLQWNQDY). Disordered stretches follow at residues 35–59 (ETAQSQPAAPALPDSPSATTEGNAN) and 126–152 (SSERTYEAQSGLIGDGPDKASGRPQYS). Low complexity predominate over residues 36–54 (TAQSQPAAPALPDSPSATT). Transmembrane regions (helical) follow at residues 365 to 385 (LLGNWGWSIIVLTIVIKLAFF), 435 to 455 (LGGCLPILVQMPVFLALYWVL), 468 to 488 (FWITDLSIKDPYFILPIIMGV), and 513 to 533 (PIIFTFFFLWFPAGLVLYWVV).

Belongs to the OXA1/ALB3/YidC family. Type 1 subfamily. In terms of assembly, interacts with the Sec translocase complex via SecD. Specifically interacts with transmembrane segments of nascent integral membrane proteins during membrane integration.

Its subcellular location is the cell inner membrane. Its function is as follows. Required for the insertion and/or proper folding and/or complex formation of integral membrane proteins into the membrane. Involved in integration of membrane proteins that insert both dependently and independently of the Sec translocase complex, as well as at least some lipoproteins. Aids folding of multispanning membrane proteins. The sequence is that of Membrane protein insertase YidC from Stutzerimonas stutzeri (strain A1501) (Pseudomonas stutzeri).